The sequence spans 347 residues: MNPLIFSTILATIIMGTVIVMTSSHWLTIWIGFEMNMLAIIPMLMKQHNPRSTEAATKYFLTQATASMLLMLAVIINLTHTGQWTITKSFNPLASIIMTIALTMKLGLSPFHFWVPEVAQGIPLSSCLILLTWQKLAPLSILYMISPTINLNLLLSMSLISIAIGGWGGLNQTQLRKIMAYSSIAHMGWMTAVLAYNPTMTMLNLLVYITMTTTMFMLLIKSASTTTLSLAIMWNKIPLVTTLTLTIMLSLGGLPPLTGFLPKWMIIQELTKNNNIILPTLMAIMALLSLYFYMRLTYATTLTMFPTTNDLKIKWQFEPKKHMNLLSPLIVTSTLTLPLAPTMLLLD.

The next 11 helical transmembrane spans lie at 1–21, 25–45, 59–79, 96–116, 127–147, 149–169, 178–198, 200–220, 237–257, 276–296, and 325–345; these read MNPL…VIVM, HWLT…PMLM, YFLT…INLT, IIMT…FWVP, CLIL…MISP, INLN…GWGG, IMAY…AYNP, MTML…MLLI, IPLV…LPPL, IILP…YMRL, and LLSP…TMLL.

It belongs to the complex I subunit 2 family. As to quaternary structure, core subunit of respiratory chain NADH dehydrogenase (Complex I) which is composed of 45 different subunits. Interacts with TMEM242.

It is found in the mitochondrion inner membrane. The catalysed reaction is a ubiquinone + NADH + 5 H(+)(in) = a ubiquinol + NAD(+) + 4 H(+)(out). Functionally, core subunit of the mitochondrial membrane respiratory chain NADH dehydrogenase (Complex I) which catalyzes electron transfer from NADH through the respiratory chain, using ubiquinone as an electron acceptor. Essential for the catalytic activity and assembly of complex I. The sequence is that of NADH-ubiquinone oxidoreductase chain 2 from Natalus tumidirostris (Trinidadian funnel-eared bat).